Consider the following 252-residue polypeptide: Imidazole glycerol phosphate synthase subunit HisF (252 aa).

Active-site residues include aspartate 11 and aspartate 130.

Belongs to the HisA/HisF family. Heterodimer of HisH and HisF.

It is found in the cytoplasm. It carries out the reaction 5-[(5-phospho-1-deoxy-D-ribulos-1-ylimino)methylamino]-1-(5-phospho-beta-D-ribosyl)imidazole-4-carboxamide + L-glutamine = D-erythro-1-(imidazol-4-yl)glycerol 3-phosphate + 5-amino-1-(5-phospho-beta-D-ribosyl)imidazole-4-carboxamide + L-glutamate + H(+). Its pathway is amino-acid biosynthesis; L-histidine biosynthesis; L-histidine from 5-phospho-alpha-D-ribose 1-diphosphate: step 5/9. In terms of biological role, IGPS catalyzes the conversion of PRFAR and glutamine to IGP, AICAR and glutamate. The HisF subunit catalyzes the cyclization activity that produces IGP and AICAR from PRFAR using the ammonia provided by the HisH subunit. This chain is Imidazole glycerol phosphate synthase subunit HisF, found in Staphylococcus aureus (strain USA300).